A 410-amino-acid polypeptide reads, in one-letter code: Putative F-box/kelch-repeat protein At1g15680 (410 aa).

The 46-residue stretch at 13-58 (CKRRIELPEELLAEIVARLPFISITRFKSVCKGWRSLIESTYFRHL) folds into the F-box domain. Kelch repeat units follow at residues 177–227 (VVCM…SLKK) and 274–327 (AYTT…YFPV).

This Arabidopsis thaliana (Mouse-ear cress) protein is Putative F-box/kelch-repeat protein At1g15680.